The primary structure comprises 293 residues: MSTPSIDRGFKADVLASALPWLKQLHGKIVVVKYGGNAMTDDVLKAAFAADMVFLRNCGIHPVVVHGGGPQISAMLKRLGIEGDFKGGFRVTTPEVLDVARMVLFGQVGRELVNLINAHGPYAVGVTGEDAQLFTAVRRNVTVDGVATDIGLVGDVEHVNAGSLLDLIAAGRIPVVSTIAPDADGVVHNINADTAAAALAEALGAEKLVMLTDVEGLYTDWPDRTSLVSEIDTGALTQLLPKLESGMVPKIEACLRAVNGGVPSAHVIDGRVEHCVLVELFTDEGTGTKVVAQ.

Substrate is bound by residues 68–69, Arg-90, and Asn-189; that span reads GG.

The protein belongs to the acetylglutamate kinase family. ArgB subfamily.

The protein resides in the cytoplasm. The catalysed reaction is N-acetyl-L-glutamate + ATP = N-acetyl-L-glutamyl 5-phosphate + ADP. Its pathway is amino-acid biosynthesis; L-arginine biosynthesis; N(2)-acetyl-L-ornithine from L-glutamate: step 2/4. In terms of biological role, catalyzes the ATP-dependent phosphorylation of N-acetyl-L-glutamate. The protein is Acetylglutamate kinase of Mycolicibacterium smegmatis (strain ATCC 700084 / mc(2)155) (Mycobacterium smegmatis).